A 127-amino-acid chain; its full sequence is Aspartate 1-decarboxylase (127 aa).

The active-site Schiff-base intermediate with substrate; via pyruvic acid is Ser25. Pyruvic acid (Ser) is present on Ser25. Thr57 is a substrate binding site. The active-site Proton donor is Tyr58. Substrate is bound at residue 73–75 (GAA).

This sequence belongs to the PanD family. In terms of assembly, heterooctamer of four alpha and four beta subunits. Pyruvate serves as cofactor. Post-translationally, is synthesized initially as an inactive proenzyme, which is activated by self-cleavage at a specific serine bond to produce a beta-subunit with a hydroxyl group at its C-terminus and an alpha-subunit with a pyruvoyl group at its N-terminus.

It localises to the cytoplasm. It carries out the reaction L-aspartate + H(+) = beta-alanine + CO2. It participates in cofactor biosynthesis; (R)-pantothenate biosynthesis; beta-alanine from L-aspartate: step 1/1. Functionally, catalyzes the pyruvoyl-dependent decarboxylation of aspartate to produce beta-alanine. This is Aspartate 1-decarboxylase from Bacillus cereus (strain B4264).